The sequence spans 489 residues: N-succinylglutamate 5-semialdehyde dehydrogenase (489 aa).

223-228 (GSASTG) contacts NAD(+). Catalysis depends on residues glutamate 246 and cysteine 280.

This sequence belongs to the aldehyde dehydrogenase family. AstD subfamily.

The catalysed reaction is N-succinyl-L-glutamate 5-semialdehyde + NAD(+) + H2O = N-succinyl-L-glutamate + NADH + 2 H(+). The protein operates within amino-acid degradation; L-arginine degradation via AST pathway; L-glutamate and succinate from L-arginine: step 4/5. Its function is as follows. Catalyzes the NAD-dependent reduction of succinylglutamate semialdehyde into succinylglutamate. This chain is N-succinylglutamate 5-semialdehyde dehydrogenase, found in Acinetobacter baylyi (strain ATCC 33305 / BD413 / ADP1).